Reading from the N-terminus, the 907-residue chain is MKKRIDYLSNKQNKYSIRRFTVGTTSVIVGATILFGIGNHQAQASEQSNDTTQSSKNNASADSEKNNMIETPQLNTTANDTSDISANTNSANVDSTAKPMSTQTSNTTTTEPASTNETPQLTAIKDQATAAKMQDQTVPQEANSQVDNKTTNDANSIATNSELKNPQTLDLPQSSPQTISNAQGTSKPSVRTRAVRSLAVAEPVVNAADAKGTNVNDKVTAKDFQLEKTTFDPNQSGNTFMAANFTVTGQVKSGDYFTAKLPDSVTGNGDVDYSNSNNTMPIADIVNDKNEVVAKATYDILTKTYTFVFTDYVNDKQNINGKFSLPLFTDRAKAPKSGTYDANINIADEMFNNKITYNYSSPIAGIDKPNGANISSQIIGVDTASGQNTYKQTVFVNPKQRVLGNTWVYIKGYQDKIEESSGKVSATDTKLRIFEVNDTSKLSDSYYADPNDSNLKEVTDQFKDKITYKYQNVASINFGDINKTYVVLVEGHYDKTGKNLKTQVIQENVDPATGKDYSIFGWNNENVVRYGGGSADGDSAVNPKDPTPGPPVDPEPSPDPEPEPSPDPDPEPTPDPEPSPDPDPDSDSDSDSGSDSDSDSDSDSDSDSDSGSDSDSDSDSDSESDSESDSDSDSESDSDSDSDSESDSDSDSDSDSDSDSDSDSDSDSDSDSDSDSDSDSDSESDSDSDSDSESDSDSDSDSDSDSDSDSDSDSDSDSDSDSDSDSDSESDSDSDSDSDSDSDSDSDSDSDSDSDSDSDSDSDSDSESDSDSDSDSDSDSDSDSDSDSDSDSDSDSDSDSDSESDSDSDSDSDSDSDSDSDSDSDSDSDSDSDSRVTPPNNEQKAPSNPKGEVNHSNKVSKQHKTDALPETGDKSENTNATLFGAMMALLGSLLLFRKRKQDHKEKA.

The first 44 residues, 1–44, serve as a signal peptide directing secretion; that stretch reads MKKRIDYLSNKQNKYSIRRFTVGTTSVIVGATILFGIGNHQAQA. The short motif at 15 to 26 is the YSIRK-G/S signaling motif element; the sequence is YSIRRFTVGTTS. Composition is skewed to polar residues over residues 44-61 and 68-101; these read ASEQSNDTTQSSKNNASA and MIETPQLNTTANDTSDISANTNSANVDSTAKPMS. Positions 44-191 are disordered; it reads ASEQSNDTTQ…AQGTSKPSVR (148 aa). A ligand binding A region region spans residues 45–542; it reads SEQSNDTTQS…GSADGDSAVN (498 aa). Low complexity predominate over residues 102-119; sequence TQTSNTTTTEPASTNETP. Residues 134–189 show a composition bias toward polar residues; that stretch reads QDQTVPQEANSQVDNKTTNDANSIATNSELKNPQTLDLPQSSPQTISNAQGTSKPS. The MIDAS-like motif motif lies at 272-276; sequence DYSNS. The tract at residues 530-879 is disordered; it reads YGGGSADGDS…ETGDKSENTN (350 aa). Residues 545 to 555 show a composition bias toward pro residues; that stretch reads DPTPGPPVDPE. Acidic residues predominate over residues 556 to 831; that stretch reads PSPDPEPEPS…SDSDSDSDSD (276 aa). Residues 835–846 show a composition bias toward polar residues; it reads RVTPPNNEQKAP. Positions 863 to 876 are enriched in basic and acidic residues; that stretch reads HKTDALPETGDKSE. The LPXTG sorting signal signature appears at 868–872; that stretch reads LPETG. Threonine 871 carries the post-translational modification Pentaglycyl murein peptidoglycan amidated threonine. Residues 872–907 constitute a propeptide, removed by sortase; the sequence is GDKSENTNATLFGAMMALLGSLLLFRKRKQDHKEKA.

It belongs to the serine-aspartate repeat-containing protein (SDr) family. Post-translationally, proteolytically cleaved by aureolysin (aur). This cleavage leads to the inactivation of ClfB.

The protein resides in the secreted. The protein localises to the cell wall. In terms of biological role, cell surface-associated protein implicated in virulence by promoting bacterial attachment to both alpha- and beta-chains of human fibrinogen and inducing the formation of bacterial clumps. The protein is Clumping factor B (clfB) of Staphylococcus aureus (strain MW2).